The sequence spans 141 residues: ATP synthase epsilon chain (141 aa).

Belongs to the ATPase epsilon chain family. In terms of assembly, F-type ATPases have 2 components, CF(1) - the catalytic core - and CF(0) - the membrane proton channel. CF(1) has five subunits: alpha(3), beta(3), gamma(1), delta(1), epsilon(1). CF(0) has three main subunits: a, b and c.

It localises to the cell inner membrane. In terms of biological role, produces ATP from ADP in the presence of a proton gradient across the membrane. The sequence is that of ATP synthase epsilon chain from Bordetella avium (strain 197N).